Consider the following 543-residue polypeptide: Biotinidase (543 aa).

The first 41 residues, 1–41 (MAHAHIQGGRRAKSRFVVCIMSGARSKLALFLCGCYVVALG), serve as a signal peptide directing secretion. Residues 72–351 (NPLALISRQE…VGLIGAENAT (280 aa)) form the CN hydrolase domain. The Proton acceptor role is filled by Glu-112. Residue Asn-119 is glycosylated (N-linked (GlcNAc...) asparagine). Residue Asn-150 is glycosylated (N-linked (GlcNAc...) (complex) asparagine). An N-linked (GlcNAc...) asparagine glycan is attached at Asn-203. Lys-212 functions as the Proton donor in the catalytic mechanism. Residue Cys-245 is the Nucleophile of the active site. N-linked (GlcNAc...) asparagine glycans are attached at residues Asn-349, Asn-402, and Asn-489.

The protein belongs to the carbon-nitrogen hydrolase superfamily. BTD/VNN family.

Its subcellular location is the secreted. The protein localises to the extracellular space. The catalysed reaction is biocytin + H2O = biotin + L-lysine. The enzyme catalyses biotin amide + H2O = biotin + NH4(+). In terms of biological role, catalytic release of biotin from biocytin, the product of biotin-dependent carboxylases degradation. The protein is Biotinidase of Homo sapiens (Human).